The sequence spans 253 residues: 5'-nucleotidase SurE (253 aa).

Asp8, Asp9, Ser39, and Asn92 together coordinate a divalent metal cation.

The protein belongs to the SurE nucleotidase family. A divalent metal cation serves as cofactor.

It localises to the cytoplasm. It carries out the reaction a ribonucleoside 5'-phosphate + H2O = a ribonucleoside + phosphate. Nucleotidase that shows phosphatase activity on nucleoside 5'-monophosphates. This Burkholderia vietnamiensis (strain G4 / LMG 22486) (Burkholderia cepacia (strain R1808)) protein is 5'-nucleotidase SurE.